Reading from the N-terminus, the 862-residue chain is Active breakpoint cluster region-related protein (862 aa).

A disordered region spans residues 30–84 (DAEGNEEHKSSREGSETMPYIDESPTMSPQLSARSQDSVDGVSPTPTEVLLPGGE). A compositionally biased stretch (basic and acidic residues) spans 34–44 (NEEHKSSREGS). The segment covering 54 to 67 (PTMSPQLSARSQDS) has biased composition (polar residues). Positions 93-286 (MRKLVLSGVL…QNFLSSINED (194 aa)) constitute a DH domain. A PH domain is found at 303–462 (QLVKDGFLVE…WREAIQKLQK (160 aa)). The C2 domain maps to 488-616 (VHNVPIISHK…QSKNWHDDVI (129 aa)). The region spanning 650–848 (VKISVVTKRE…YYLQHPPISF (199 aa)) is the Rho-GAP domain.

It is found in the cell projection. It localises to the dendritic spine. Its subcellular location is the axon. The protein resides in the synapse. Functionally, protein with a unique structure having two opposing regulatory activities toward small GTP-binding proteins. The C-terminus is a GTPase-activating protein domain which stimulates GTP hydrolysis by RAC1, RAC2 and CDC42. Accelerates the intrinsic rate of GTP hydrolysis of RAC1 or CDC42, leading to down-regulation of the active GTP-bound form. The central Dbl homology (DH) domain functions as guanine nucleotide exchange factor (GEF) that modulates the GTPases CDC42, RHOA and RAC1. Promotes the conversion of CDC42, RHOA and RAC1 from the GDP-bound to the GTP-bound form. The protein is Active breakpoint cluster region-related protein (abr) of Xenopus tropicalis (Western clawed frog).